The chain runs to 598 residues: MPCIQAQYGTPAPSPGPRDHLASDPLTPEFIKPTMDLASPEAAPAAPTALPSFSTFMDGYTGEFDTFLYQLPGTVQPCSSASSSASSTSSSSATSPASASFKFEDFQVYGCYPGPLSGPVDEALSSSGSDYYGSPCSAPSPSTPSFQPPQLSPWDGSFGHFSPSQTYEGLRAWTEQLPKASGPPQPPAFFSFSPPTGPSPSLAQSPLKLFPSQATHQLGEGESYSMPTAFPGLAPTSPHLEGSGILDTPVTSTKARSGAPGGSEGRCAVCGDNASCQHYGVRTCEGCKGFFKRTVQKNAKYICLANKDCPVDKRRRNRCQFCRFQKCLAVGMVKEVVRTDSLKGRRGRLPSKPKQPPDASPANLLTSLVRAHLDSGPSTAKLDYSKFQELVLPHFGKEDAGDVQQFYDLLSGSLEVIRKWAEKIPGFAELSPADQDLLLESAFLELFILRLAYRSKPGEGKLIFCSGLVLHRLQCARGFGDWIDSILAFSRSLHSLLVDVPAFACLSALVLITDRHGLQEPRRVEELQNRIASCLKEHVAAVAGEPQPASCLSRLLGKLPELRTLCTQGLQRIFYLKLEDLVPPPPIIDKIFMDTLPF.

Disordered regions lie at residues 1–44 (MPCI…EAAP), 131–158 (YYGS…DGSF), 177–206 (LPKA…AQSP), and 221–265 (GESY…GSEG). Positions 134–145 (SPCSAPSPSTPS) are enriched in low complexity. Residues 171–466 (RAWTEQLPKA…PGEGKLIFCS (296 aa)) form a required for nuclear import region. A DNA-binding region (nuclear receptor) is located at residues 264–339 (EGRCAVCGDN…VGMVKEVVRT (76 aa)). 2 consecutive NR C4-type zinc fingers follow at residues 267–287 (CAVC…CEGC) and 303–327 (CLAN…FQKC). Residues 268-354 (AVCGDNASCQ…RRGRLPSKPK (87 aa)) are required for binding NBRE-containing DNA. The tract at residues 299-361 (AKYICLANKD…KPKQPPDASP (63 aa)) is required for the interaction with RXRA. Position 341 is a phosphoserine; by PKA (Ser341). The tract at residues 341-361 (SLKGRRGRLPSKPKQPPDASP) is disordered. Phosphoserine is present on Ser351. In terms of domain architecture, NR LBD spans 360–595 (SPANLLTSLV…PIIDKIFMDT (236 aa)). A binds lipopolysaccharide region spans residues 521-544 (PRRVEELQNRIASCLKEHVAAVAG). Residues 584–595 (PPPIIDKIFMDT) form an AF-2 region.

The protein belongs to the nuclear hormone receptor family. NR4 subfamily. Binds the NGFI-B response element (NBRE) as a monomer. Binds the Nur response element (NurRE), consisting of two inverse NBRE-related octanucleotide repeats separated by 6 base-pairs, as a dimer. Interacts (via N-terminus) with NLRP3 (via LRR repeat domain); the interaction is direct, requires binding of NR4A1/Nur77 to NBRE-containing dsDNA and lipopolysaccharide, and leads to non-canonical NLRP3 inflammasome activation. Interacts with GADD45GIP1. Interacts with STK11. Interacts with IFI27. Heterodimer (via DNA-binding domain) with RXRA (via C-terminus); DNA-binding of the heterodimer is enhanced by 9-cis retinoic acid. Competes for the RXRA interaction with EP300 and thereby attenuates EP300 mediated acetylation of RXRA. Interacts with NCOA1. Interacts with NCOA2. Interacts with NCOA3. Zn(2+) is required as a cofactor. In terms of processing, phosphorylated at Ser-351 by RPS6KA1 and RPS6KA3 in response to mitogenic or stress stimuli. Post-translationally, acetylated by p300/CBP, acetylation increases stability. Deacetylated by HDAC1. As to expression, fetal muscle and adult liver, brain and thyroid.

The protein resides in the nucleus. The protein localises to the cytoplasm. Its subcellular location is the cytosol. It localises to the mitochondrion. With respect to regulation, its transcription factor activity is activated by binding cytosporone B (Csn-B) via its ligand-binding (NR LBD) domain and stimulates recruitment of coactivators NCOA1 and NCOA2, but not NCOA3, to promoters. Csn-B-binding is also accompanied by its translocation to the mitochondrion. Its transcription factor activity is activated by corticotropin-releasing hormone (CRH) and forskolin. Not activated by binding cytosporone C (Csn-C). Orphan nuclear receptor. Binds the NGFI-B response element (NBRE) 5'-AAAGGTCA-3'. Binds 9-cis-retinoic acid outside of its ligand-binding (NR LBD) domain. Participates in energy homeostasis by sequestrating the kinase STK11 in the nucleus, thereby attenuating cytoplasmic AMPK activation. Regulates the inflammatory response in macrophages by regulating metabolic adaptations during inflammation, including repressing the transcription of genes involved in the citric acid cycle (TCA). Inhibits NF-kappa-B signaling by binding to low-affinity NF-kappa-B binding sites, such as at the IL2 promoter. May act concomitantly with NR4A2 in regulating the expression of delayed-early genes during liver regeneration. Plays a role in the vascular response to injury. In terms of biological role, in the cytosol, upon its detection of both bacterial lipopolysaccharide (LPS) and NBRE-containing mitochondrial DNA released by GSDMD pores during pyroptosis, it promotes non-canonical NLRP3 inflammasome activation by stimulating association of NLRP3 and NEK7. The protein is Nuclear receptor subfamily 4immunitygroup A member 1 (NR4A1) of Homo sapiens (Human).